An 81-amino-acid polypeptide reads, in one-letter code: Protein Vpu (81 aa).

At 1–7 (MSILQIV) the chain is on the extracellular side. Residues 8-28 (AIVAIIVALILAIVVWTIVYI) form a helical membrane-spanning segment. The Cytoplasmic portion of the chain corresponds to 29 to 81 (EYKRLLRQRKIDWLIDRIRERAEDSGNESEGDTEELSTLVEMEPDNFRNDNDM). A disordered region spans residues 50–81 (AEDSGNESEGDTEELSTLVEMEPDNFRNDNDM). Phosphoserine; by host CK2 occurs at positions 53 and 57. The segment covering 53–63 (SGNESEGDTEE) has biased composition (acidic residues).

Belongs to the HIV-1 VPU protein family. In terms of assembly, homopentamer. Interacts with host CD4 and BRTC; these interactions induce proteasomal degradation of CD4. Interacts with host BST2; this interaction leads to the degradation of host BST2. Interacts with host FBXW11. Interacts with host AP1M1; this interaction plays a role in the mistrafficking and subsequent degradation of host BST2. Interacts with host RANBP2; this interaction allows Vpu to down-regulate host BLM sumoylation. Post-translationally, phosphorylated by host CK2. This phosphorylation is necessary for interaction with human BTRC and degradation of CD4.

Its subcellular location is the host membrane. Its activity is regulated as follows. Ion channel activity is inhibited by hexamethylene amiloride in vitro. Enhances virion budding by targeting host CD4 and Tetherin/BST2 to proteasome degradation. Degradation of CD4 prevents any unwanted premature interactions between viral Env and its host receptor CD4 in the endoplasmic reticulum. Degradation of antiretroviral protein Tetherin/BST2 is important for virion budding, as BST2 tethers new viral particles to the host cell membrane. Mechanistically, Vpu bridges either CD4 or BST2 to BTRC, a substrate recognition subunit of the Skp1/Cullin/F-box protein E3 ubiquitin ligase, induces their ubiquitination and subsequent proteasomal degradation. The alteration of the E3 ligase specificity by Vpu seems to promote the degradation of host IKBKB, leading to NF-kappa-B down-regulation and subsequent apoptosis. Acts as a viroporin that forms an oligomeric ion channel in membranes. Modulates the host DNA repair mechanisms to promote degradation of nuclear viral cDNA in cells that are already productively infected in order to suppress immune sensing and proviral hyper-integration (superinfection). Manipulates PML-NBs and modulates SUMOylation of host BLM protein thereby enhancing its DNA-end processing activity toward viral unintegrated linear DNA. Also inhibits RAD52-mediated homologous repair of viral cDNA, preventing the generation of dead-end circular forms of single copies of the long terminal repeat and permitting sustained nucleolytic attack. This Human immunodeficiency virus type 1 (HIV-1) protein is Protein Vpu.